The following is a 528-amino-acid chain: Tyrosine-protein kinase transforming protein Yes (528 aa).

The segment covering 1–12 has biased composition (basic and acidic residues); that stretch reads DKGPAMKYRTDN. Positions 1 to 35 are disordered; the sequence is DKGPAMKYRTDNTPEPISSHVSHYGSDSSQATQSP. The span at 18 to 29 shows a compositional bias: low complexity; it reads SSHVSHYGSDSS. One can recognise an SH3 domain in the interval 81–142; that stretch reads GGGTVFVALY…PSNYVAPADS (62 aa). The SH2 domain occupies 148-245; sequence WYFGKMGRKD…GLCHKLTTVC (98 aa). Positions 267–520 constitute a Protein kinase domain; that stretch reads LRLEVKLGQG…YIQSFLEDYF (254 aa). ATP contacts are provided by residues 273–281 and lysine 295; that span reads LGQGCFGEV. The active-site Proton acceptor is aspartate 386. The residue at position 416 (tyrosine 416) is a Phosphotyrosine; by autocatalysis.

Belongs to the protein kinase superfamily. Tyr protein kinase family. SRC subfamily.

The enzyme catalyses L-tyrosyl-[protein] + ATP = O-phospho-L-tyrosyl-[protein] + ADP + H(+). This Galliformes (Y73SV) protein is Tyrosine-protein kinase transforming protein Yes (V-YES).